Reading from the N-terminus, the 71-residue chain is Beta-defensin 131A (71 aa).

Residues 1-22 (MRVLFFVFGVLSLMFTVPPARS) form the signal peptide. Intrachain disulfides connect Cys29–Cys57, Cys37–Cys51, and Cys41–Cys58.

It belongs to the beta-defensin family.

The protein resides in the secreted. In terms of biological role, has antibacterial activity. Upon stimulation with lipoteichoic acid, promotes cytokines and chemokines production and secretion. The sequence is that of Beta-defensin 131A from Pan troglodytes (Chimpanzee).